An 879-amino-acid polypeptide reads, in one-letter code: Band 4.1-like protein 1 (879 aa).

Positions 1–88 (MTTETGPDSE…TPSKAQKSPQ (88 aa)) are disordered. Residues 17-35 (ETPQQPEAAAAVTTPVTPA) show a composition bias toward low complexity. Thr-30 is modified (phosphothreonine). Residues 38 to 50 (SHPETNSNEKHLT) are compositionally biased toward basic and acidic residues. Ser-75 carries the phosphoserine modification. The span at 76 to 87 (ERTTPSKAQKSP) shows a compositional bias: polar residues. Thr-79 is modified (phosphothreonine). In terms of domain architecture, FERM spans 97 to 378 (AICRVTLLDA…EHHTFFRLVS (282 aa)). Tyr-343 is subject to Phosphotyrosine. Residues Ser-378, Ser-430, Ser-437, Ser-461, and Ser-466 each carry the phosphoserine modification. The tract at residues 381–482 (PPPKGFLVMG…VRTPTKIKEL (102 aa)) is hydrophilic. The interval 428–501 (SRSLDGAEFS…HKQEFLDKPE (74 aa)) is disordered. Basic and acidic residues predominate over residues 444 to 501 (ENHDAGPEGDKREDDAESGGRRSEAEEGEVRTPTKIKELKPEQETTPRHKQEFLDKPE). Thr-475 carries the post-translational modification Phosphothreonine. A spectrin--actin-binding region spans residues 483–541 (KPEQETTPRHKQEFLDKPEDVLLKHQASINELKRTLKEPNSKLIHRDRDWDRERRLPSS). Residue Ser-510 is modified to Phosphoserine. Basic and acidic residues predominate over residues 514 to 538 (LKRTLKEPNSKLIHRDRDWDRERRL). The interval 514-594 (LKRTLKEPNS…QDQERDAVFL (81 aa)) is disordered. Residues Ser-540, Ser-541, Ser-544, and Ser-546 each carry the phosphoserine modification. Thr-550 carries the post-translational modification Phosphothreonine. Residues 550 to 577 (TPEKASERAGLREGSEEKVKPPRPRAPE) show a composition bias toward basic and acidic residues. Phosphoserine occurs at positions 564, 578, 639, 648, 650, 665, 666, 671, 677, and 684. The interval 657-696 (FAQDLKGPSSQEDESGGLEDSPDRGACSTPEMPQFESVKA) is disordered. Phosphothreonine is present on Thr-685. Residues Ser-721, Ser-782, and Ser-868 each carry the phosphoserine modification. A C-terminal (CTD) region spans residues 743–879 (PCITTETIST…EERDKKPQES (137 aa)).

As to quaternary structure, interacts with AGAP2. Highest expression in brain, also present in kidney, olfactory epithelium, retina, sensory ganglia, gastrointestinal tract (only enteric neurons) and lung.

Its subcellular location is the cytoplasm. It localises to the cytoskeleton. In terms of biological role, may function to confer stability and plasticity to neuronal membrane via multiple interactions, including the spectrin-actin-based cytoskeleton, integral membrane channels and membrane-associated guanylate kinases. The protein is Band 4.1-like protein 1 of Mus musculus (Mouse).